Reading from the N-terminus, the 87-residue chain is UPF0250 protein ETA_23570 (87 aa).

The protein belongs to the UPF0250 family.

The sequence is that of UPF0250 protein ETA_23570 from Erwinia tasmaniensis (strain DSM 17950 / CFBP 7177 / CIP 109463 / NCPPB 4357 / Et1/99).